The following is a 104-amino-acid chain: Pyrimidine/purine nucleoside phosphorylase (104 aa).

It belongs to the nucleoside phosphorylase PpnP family.

The catalysed reaction is a purine D-ribonucleoside + phosphate = a purine nucleobase + alpha-D-ribose 1-phosphate. It catalyses the reaction adenosine + phosphate = alpha-D-ribose 1-phosphate + adenine. The enzyme catalyses cytidine + phosphate = cytosine + alpha-D-ribose 1-phosphate. It carries out the reaction guanosine + phosphate = alpha-D-ribose 1-phosphate + guanine. The catalysed reaction is inosine + phosphate = alpha-D-ribose 1-phosphate + hypoxanthine. It catalyses the reaction thymidine + phosphate = 2-deoxy-alpha-D-ribose 1-phosphate + thymine. The enzyme catalyses uridine + phosphate = alpha-D-ribose 1-phosphate + uracil. It carries out the reaction xanthosine + phosphate = alpha-D-ribose 1-phosphate + xanthine. Functionally, catalyzes the phosphorolysis of diverse nucleosides, yielding D-ribose 1-phosphate and the respective free bases. Can use uridine, adenosine, guanosine, cytidine, thymidine, inosine and xanthosine as substrates. Also catalyzes the reverse reactions. The polypeptide is Pyrimidine/purine nucleoside phosphorylase (Hydrogenovibrio crunogenus (strain DSM 25203 / XCL-2) (Thiomicrospira crunogena)).